The following is a 312-amino-acid chain: Type II methyltransferase M.NgoMIV (312 aa).

Positions 3–311 (FTSLEICAGA…RQIIKALKKE (309 aa)) constitute an SAM-dependent MTase C5-type domain. Cys-74 is a catalytic residue.

Belongs to the class I-like SAM-binding methyltransferase superfamily. C5-methyltransferase family.

The catalysed reaction is a 2'-deoxycytidine in DNA + S-adenosyl-L-methionine = a 5-methyl-2'-deoxycytidine in DNA + S-adenosyl-L-homocysteine + H(+). A methylase, recognizes the double-stranded sequence 5'-GCCGGC-3', methylates C-2 on both strands, and protects the DNA from cleavage by the NgoMIV endonuclease. The polypeptide is Type II methyltransferase M.NgoMIV (ngoMIVM) (Neisseria gonorrhoeae).